We begin with the raw amino-acid sequence, 273 residues long: MSTRTDHYAVIGNPIAHSKSPDIHARFAAQTQQDLKYDRLLAPLDGFLASVQEFIRNDGKGLNVTVPFKLEAYAMASRLSERARAAGAVNTLKFENGEMLGDNTDGVGLVTDIVRNAGVAVAGKTVLLLGAGGAARGVILPLLHEKPARLVIANRTHSKALDLAERFAPQPTLEVSDFGALDDAFDIVINATAASLASEVPPISPRVFAKRTLAYDMMYGAAPTPFMQFAAEHGATVRDGLGMLVEQAAESFYVWRNVRPETAAVFKELRDKL.

Residues S18 to S20 and T65 each bind shikimate. Catalysis depends on K69, which acts as the Proton acceptor. E81 is an NADP(+) binding site. N90 and D105 together coordinate shikimate. Residues G130–A134, N154–K159, and M217 contribute to the NADP(+) site. A shikimate-binding site is contributed by Y219. Residue G240 participates in NADP(+) binding.

This sequence belongs to the shikimate dehydrogenase family. In terms of assembly, homodimer.

It carries out the reaction shikimate + NADP(+) = 3-dehydroshikimate + NADPH + H(+). Its pathway is metabolic intermediate biosynthesis; chorismate biosynthesis; chorismate from D-erythrose 4-phosphate and phosphoenolpyruvate: step 4/7. Its function is as follows. Involved in the biosynthesis of the chorismate, which leads to the biosynthesis of aromatic amino acids. Catalyzes the reversible NADPH linked reduction of 3-dehydroshikimate (DHSA) to yield shikimate (SA). This chain is Shikimate dehydrogenase (NADP(+)), found in Janthinobacterium sp. (strain Marseille) (Minibacterium massiliensis).